Consider the following 201-residue polypeptide: Recombination protein RecR (201 aa).

Residues 60–75 (CQVCGNVDVRDPCTVC) form a C4-type zinc finger. One can recognise a Toprim domain in the interval 83 to 178 (SVLVVVAEVA…KVTRLAHGVP (96 aa)).

Belongs to the RecR family.

Functionally, may play a role in DNA repair. It seems to be involved in an RecBC-independent recombinational process of DNA repair. It may act with RecF and RecO. In Azorhizobium caulinodans (strain ATCC 43989 / DSM 5975 / JCM 20966 / LMG 6465 / NBRC 14845 / NCIMB 13405 / ORS 571), this protein is Recombination protein RecR.